The chain runs to 292 residues: MTGNLRTFILMAALTALVMGMGGLIGGRGGAVIALAIAGAGNLFAWWNSDKMVLRQQGAHLVTRQQAPELVDMVAALAQRANLPMPKVYVLETEQPNAFATGRNPENAAVAVTQGIMRVLNRDELAGVIAHELAHIKHRDTLTMTVTATMAGAIAMLGNMLMFSSMFGGRDDNRGSGLAAILAMIFAPMAAGLVQMAISRTREYEADRMGAEICGRPMALAGALAKISRAAGQVVNIPAERNPASASMFIVNPLHALRMDRLFATHPPTEERIARLQAMASGAPASGPWGAR.

The next 2 membrane-spanning stretches (helical) occupy residues 7–27 (TFILMAALTALVMGMGGLIGG) and 29–49 (GGAVIALAIAGAGNLFAWWNS). His-131 serves as a coordination point for Zn(2+). Glu-132 is a catalytic residue. Residue His-135 coordinates Zn(2+). 2 helical membrane-spanning segments follow: residues 148–168 (ATMAGAIAMLGNMLMFSSMFG) and 178–198 (LAAILAMIFAPMAAGLVQMAI). Glu-203 is a Zn(2+) binding site.

It belongs to the peptidase M48B family. It depends on Zn(2+) as a cofactor.

Its subcellular location is the cell inner membrane. This Paracoccus denitrificans (strain Pd 1222) protein is Protease HtpX homolog.